We begin with the raw amino-acid sequence, 945 residues long: Kinesin-like protein KIN-7F (945 aa).

The Kinesin motor domain maps to Arg34–Val356. Gly120 to Thr127 serves as a coordination point for ATP. The stretch at Val365–Asn437 forms a coiled coil. Disordered stretches follow at residues Arg484–Ser512 and Asn553–Arg588. 2 stretches are compositionally biased toward polar residues: residues Gln495–Ser512 and Ala560–Ser587.

Belongs to the TRAFAC class myosin-kinesin ATPase superfamily. Kinesin family. KIN-7 subfamily. As to quaternary structure, binds microtubules.

Its function is as follows. Binds ATP/ADP in vitro. Possesses low ATPase activity but high affinity for microtubules. The sequence is that of Kinesin-like protein KIN-7F from Oryza sativa subsp. japonica (Rice).